Consider the following 499-residue polypeptide: Probable cytosol aminopeptidase (499 aa).

Lys263 and Asp268 together coordinate Mn(2+). Lys275 is an active-site residue. Asp286, Asp345, and Glu347 together coordinate Mn(2+). Residue Arg349 is part of the active site.

Belongs to the peptidase M17 family. It depends on Mn(2+) as a cofactor.

The protein localises to the cytoplasm. It carries out the reaction Release of an N-terminal amino acid, Xaa-|-Yaa-, in which Xaa is preferably Leu, but may be other amino acids including Pro although not Arg or Lys, and Yaa may be Pro. Amino acid amides and methyl esters are also readily hydrolyzed, but rates on arylamides are exceedingly low.. The enzyme catalyses Release of an N-terminal amino acid, preferentially leucine, but not glutamic or aspartic acids.. In terms of biological role, presumably involved in the processing and regular turnover of intracellular proteins. Catalyzes the removal of unsubstituted N-terminal amino acids from various peptides. The sequence is that of Probable cytosol aminopeptidase (pepA) from Chlamydia muridarum (strain MoPn / Nigg).